The chain runs to 87 residues: Small ribosomal subunit protein uS17 (87 aa).

Belongs to the universal ribosomal protein uS17 family. As to quaternary structure, part of the 30S ribosomal subunit.

One of the primary rRNA binding proteins, it binds specifically to the 5'-end of 16S ribosomal RNA. This Bacillus thuringiensis (strain Al Hakam) protein is Small ribosomal subunit protein uS17.